Reading from the N-terminus, the 217-residue chain is Ribulose-phosphate 3-epimerase (217 aa).

Residue Ser-7 participates in substrate binding. A divalent metal cation-binding residues include His-32, Asp-34, and His-65. Asp-34 (proton acceptor) is an active-site residue. Substrate-binding positions include His-65, Gly-141–Gly-144, Asp-175–Gly-177, and Gly-197–Ser-198. A divalent metal cation is bound at residue Asp-175. Asp-175 functions as the Proton donor in the catalytic mechanism.

This sequence belongs to the ribulose-phosphate 3-epimerase family. The cofactor is a divalent metal cation.

The enzyme catalyses D-ribulose 5-phosphate = D-xylulose 5-phosphate. The protein operates within carbohydrate degradation. Functionally, catalyzes the reversible epimerization of D-ribulose 5-phosphate to D-xylulose 5-phosphate. The protein is Ribulose-phosphate 3-epimerase of Bacillus subtilis (strain 168).